Reading from the N-terminus, the 89-residue chain is MARTKKVGITGRFGPRYGRKAKRAVKKIEEEMKRKHVCPSCDRPGVKRESRGIWKCRKCGAVFTGGAYLPVTPMGKTAARNIKRIVGGK.

Zn(2+) contacts are provided by C38, C41, C56, and C59. The C4-type zinc-finger motif lies at 38 to 59 (CPSCDRPGVKRESRGIWKCRKC).

Belongs to the eukaryotic ribosomal protein eL43 family. Putative zinc-binding subfamily. As to quaternary structure, part of the 50S ribosomal subunit. The cofactor is Zn(2+).

Functionally, binds to the 23S rRNA. This chain is Large ribosomal subunit protein eL43, found in Methanothermobacter thermautotrophicus (strain ATCC 29096 / DSM 1053 / JCM 10044 / NBRC 100330 / Delta H) (Methanobacterium thermoautotrophicum).